The following is a 623-amino-acid chain: V-type proton ATPase catalytic subunit A (623 aa).

252–259 is a binding site for ATP; sequence GAFGCGKT.

It belongs to the ATPase alpha/beta chains family. As to quaternary structure, V-ATPase is a heteromultimeric enzyme composed of a peripheral catalytic V1 complex (main components: subunits A, B, C, D, E, and F) attached to an integral membrane V0 proton pore complex (main component: the proteolipid protein).

The catalysed reaction is ATP + H2O + 4 H(+)(in) = ADP + phosphate + 5 H(+)(out). Functionally, catalytic subunit of the peripheral V1 complex of vacuolar ATPase. V-ATPase vacuolar ATPase is responsible for acidifying a variety of intracellular compartments in eukaryotic cells. The polypeptide is V-type proton ATPase catalytic subunit A (Beta vulgaris (Sugar beet)).